The following is a 120-amino-acid chain: Ribosome-binding factor A (120 aa).

This sequence belongs to the RbfA family. Monomer. Binds 30S ribosomal subunits, but not 50S ribosomal subunits or 70S ribosomes.

It is found in the cytoplasm. Its function is as follows. One of several proteins that assist in the late maturation steps of the functional core of the 30S ribosomal subunit. Associates with free 30S ribosomal subunits (but not with 30S subunits that are part of 70S ribosomes or polysomes). Required for efficient processing of 16S rRNA. May interact with the 5'-terminal helix region of 16S rRNA. This is Ribosome-binding factor A from Chlorobaculum parvum (strain DSM 263 / NCIMB 8327) (Chlorobium vibrioforme subsp. thiosulfatophilum).